Reading from the N-terminus, the 307-residue chain is Putative lipid kinase SE_0507 (307 aa).

The 137-residue stretch at 3-139 folds into the DAGKc domain; the sequence is QPYNHGVLFY…YDVLKVNDLY (137 aa). ATP contacts are provided by residues S44, 74–80, and T101; that span reads GDGTLNE. S220, D223, and R225 together coordinate Mg(2+). E281 functions as the Proton acceptor in the catalytic mechanism.

The protein belongs to the diacylglycerol/lipid kinase family. Mg(2+) is required as a cofactor.

Functionally, may catalyze the ATP-dependent phosphorylation of lipids other than diacylglycerol (DAG). The protein is Putative lipid kinase SE_0507 of Staphylococcus epidermidis (strain ATCC 12228 / FDA PCI 1200).